Reading from the N-terminus, the 223-residue chain is UPF0641 membrane protein PJ4664.05 (223 aa).

Transmembrane regions (helical) follow at residues 10–30 (FNSF…FNWI), 49–69 (LTVL…FSDI), 81–101 (ILLY…WSIV), 146–166 (LSIG…MLWV), and 190–210 (TIFY…LKMV).

Belongs to the UPF0641 family.

The protein localises to the endoplasmic reticulum membrane. This chain is UPF0641 membrane protein PJ4664.05, found in Schizosaccharomyces pombe (strain 972 / ATCC 24843) (Fission yeast).